The primary structure comprises 251 residues: Aquaporin (251 aa).

Topologically, residues 1-11 (MAKEALKTLQS) are cytoplasmic. Residues 12 to 32 (MFGEMVASFVFGFAVYSAILG) form a helical membrane-spanning segment. Topologically, residues 33–42 (SSISQSSADK) are extracellular. Residues 43-63 (VIVGLTVGFSGIGVIYSFCDV) form a helical membrane-spanning segment. The Cytoplasmic segment spans residues 64–86 (TIAHFNPAITLAAILTSKIDVLQ). The NPA signature appears at 69–71 (NPA). The helical transmembrane segment at 87–107 (GLGYMLAQYIGFMLAVCALLV) threads the bilayer. At 108–133 (CSPVEYKETLDTIRPGPTDFGATSLN) the chain is on the extracellular side. The chain crosses the membrane as a helical span at residues 134–154 (VFFAEFFLTAIFVHIVFATAV). Residues 155-179 (NPYKPKVDTEGKFVDPDEKEPVDRR) lie on the Cytoplasmic side of the membrane. A helical transmembrane segment spans residues 180-200 (ITAPLCIGLTLGFLAFMGLAS). Over 201–224 (SGGAFNPGLTFAPMAMSNTWSHFW) the chain is Extracellular. An NPG motif is present at residues 206–208 (NPG). The helical transmembrane segment at 225-245 (IYLGGQYLGGLTGGLLQVLVL) threads the bilayer. At 246–251 (YKLSSD) the chain is on the cytoplasmic side.

Belongs to the MIP/aquaporin (TC 1.A.8) family.

It is found in the cell membrane. In terms of biological role, water channel required to facilitate the transport of water across membranes. Involved in osmotolerance. The polypeptide is Aquaporin (AQP) (Encephalitozoon intestinalis (Microsporidian parasite)).